Consider the following 117-residue polypeptide: Large ribosomal subunit protein uL24 (117 aa).

Positions 1–12 are enriched in polar residues; that stretch reads MSKKNSQTSPQR. The disordered stretch occupies residues 1-20; the sequence is MSKKNSQTSPQRQKMHVKKG.

Belongs to the universal ribosomal protein uL24 family. Part of the 50S ribosomal subunit.

One of two assembly initiator proteins, it binds directly to the 5'-end of the 23S rRNA, where it nucleates assembly of the 50S subunit. Functionally, one of the proteins that surrounds the polypeptide exit tunnel on the outside of the subunit. The chain is Large ribosomal subunit protein uL24 from Microcystis aeruginosa (strain NIES-843 / IAM M-2473).